The chain runs to 207 residues: Glutathione S-transferase 4 (207 aa).

Residues P2–G79 enclose the GST N-terminal domain. Glutathione is bound by residues Y8, W39, K43, G49–L51, and Q63–S64. The region spanning T81 to V207 is the GST C-terminal domain.

Belongs to the GST superfamily. Sigma family.

The enzyme catalyses RX + glutathione = an S-substituted glutathione + a halide anion + H(+). In terms of biological role, conjugation of reduced glutathione to a wide number of exogenous and endogenous hydrophobic electrophiles. May play a role in the detoxification of reactive oxygen species produced during pathogenic bacterial infection. The polypeptide is Glutathione S-transferase 4 (Caenorhabditis elegans).